The following is a 426-amino-acid chain: Transcriptional enhancer factor TEF-1 (426 aa).

Met1 bears the N-acetylmethionine mark. Over residues 1–12 the composition is skewed to polar residues; sequence MEPSSWSGSESP. The interval 1–31 is disordered; the sequence is MEPSSWSGSESPAENMERMSDSADKPIDNDA. A Phosphoserine modification is found at Ser11. Positions 15–28 are enriched in basic and acidic residues; it reads NMERMSDSADKPID. A DNA-binding region (TEA) is located at residues 28–104; that stretch reads DNDAEGVWSP…QVLARRKSRD (77 aa). An N6-lactoyllysine modification is found at Lys108. The transcriptional activation stretch occupies residues 167-426; it reads GSSQDVKPFV…QHHIYRLVKD (260 aa).

As to quaternary structure, interacts with YAP1 and WWTR1/TAZ. In terms of processing, lactylation by AARS1 promotes nuclear localization and stabilization of YAP1, leading to increased Hippo signaling pathway. Delactylated by SIRT1. In terms of tissue distribution, in developing skeletal muscle and myocardium, in mitotic neuroblasts both in the brain and spinal cord. At later stages of embryogenesis expressed in several developing structures such as the olfactory system, the intestine, and the kidney.

Its subcellular location is the nucleus. Its function is as follows. Transcription factor which plays a key role in the Hippo signaling pathway, a pathway involved in organ size control and tumor suppression by restricting proliferation and promoting apoptosis. The core of this pathway is composed of a kinase cascade wherein MST1/MST2, in complex with its regulatory protein SAV1, phosphorylates and activates LATS1/2 in complex with its regulatory protein MOB1, which in turn phosphorylates and inactivates YAP1 oncoprotein and WWTR1/TAZ. Acts by mediating gene expression of YAP1 and WWTR1/TAZ, thereby regulating cell proliferation, migration and epithelial mesenchymal transition (EMT) induction. Binds specifically and cooperatively to the SPH and GT-IIC 'enhansons' (5'-GTGGAATGT-3') and activates transcription in vivo in a cell-specific manner. The activation function appears to be mediated by a limiting cell-specific transcriptional intermediary factor (TIF). Involved in cardiac development. Binds to the M-CAT motif. In Mus musculus (Mouse), this protein is Transcriptional enhancer factor TEF-1 (Tead1).